The chain runs to 145 residues: D-aminoacyl-tRNA deacylase (145 aa).

The Gly-cisPro motif, important for rejection of L-amino acids motif lies at 137–138; it reads GP.

The protein belongs to the DTD family. Homodimer.

It localises to the cytoplasm. The enzyme catalyses glycyl-tRNA(Ala) + H2O = tRNA(Ala) + glycine + H(+). It carries out the reaction a D-aminoacyl-tRNA + H2O = a tRNA + a D-alpha-amino acid + H(+). Its function is as follows. An aminoacyl-tRNA editing enzyme that deacylates mischarged D-aminoacyl-tRNAs. Also deacylates mischarged glycyl-tRNA(Ala), protecting cells against glycine mischarging by AlaRS. Acts via tRNA-based rather than protein-based catalysis; rejects L-amino acids rather than detecting D-amino acids in the active site. By recycling D-aminoacyl-tRNA to D-amino acids and free tRNA molecules, this enzyme counteracts the toxicity associated with the formation of D-aminoacyl-tRNA entities in vivo and helps enforce protein L-homochirality. In Shewanella sp. (strain MR-4), this protein is D-aminoacyl-tRNA deacylase.